The sequence spans 508 residues: Endo-4-O-sulfatase (508 aa).

S84 carries the post-translational modification 3-oxoalanine (Ser).

This sequence belongs to the sulfatase family. In terms of processing, the conversion to 3-oxoalanine (also known as C-formylglycine, FGly), of a serine or cysteine residue in prokaryotes and of a cysteine residue in eukaryotes, is critical for catalytic activity.

Functionally, endosulfatase involved in the degradation of the glycosaminoglycans (GAGs) chondroitin sulfate (CS) and dermatan sulfate (DS). Efficiently hydrolyzes sulfate groups from a broad range of substrate size, including disaccharide to high molecular weight CS and DS polymers. Has a strict specificity for the 4-O-sulfate groups of galactosamine. GAG-specific sulfatases play a key role in the persistence of the major human gut symbiont B.thetaiotaomicron in the host gastrointestinal tract. This chain is Endo-4-O-sulfatase, found in Bacteroides thetaiotaomicron (strain ATCC 29148 / DSM 2079 / JCM 5827 / CCUG 10774 / NCTC 10582 / VPI-5482 / E50).